The primary structure comprises 290 residues: uncharacterized protein (290 aa).

Disordered stretches follow at residues 105–156 and 259–290; these read LKHK…KLTV and EGAQRDRFPGRKQPGVHEEPVLKKWPKLKSKK. The span at 114-130 shows a compositional bias: polar residues; sequence KATQQARKRNFISSKSK. 2 stretches are compositionally biased toward basic and acidic residues: residues 143–156 and 261–280; these read RESKESSKEKKLTV and AQRDRFPGRKQPGVHEEPVL.

This is an uncharacterized protein from Homo sapiens (Human).